A 235-amino-acid polypeptide reads, in one-letter code: LexA repressor (235 aa).

The segment at residues 47 to 67 (IREIADAVGLTSTSSVAHQLR) is a DNA-binding region (H-T-H motif). Active-site for autocatalytic cleavage activity residues include serine 159 and lysine 196.

The protein belongs to the peptidase S24 family. In terms of assembly, homodimer.

The enzyme catalyses Hydrolysis of Ala-|-Gly bond in repressor LexA.. Functionally, represses a number of genes involved in the response to DNA damage (SOS response), including recA and lexA. In the presence of single-stranded DNA, RecA interacts with LexA causing an autocatalytic cleavage which disrupts the DNA-binding part of LexA, leading to derepression of the SOS regulon and eventually DNA repair. In Mycobacterium leprae (strain Br4923), this protein is LexA repressor.